The primary structure comprises 195 residues: Probable prefoldin subunit 3 (195 aa).

Belongs to the prefoldin subunit alpha family. Heterohexamer of two PFD-alpha type and four PFD-beta type subunits.

Functionally, binds specifically to cytosolic chaperonin (c-CPN) and transfers target proteins to it. Binds to nascent polypeptide chain and promotes folding in an environment in which there are many competing pathways for nonnative proteins. This Dictyostelium discoideum (Social amoeba) protein is Probable prefoldin subunit 3 (pfdn3).